The sequence spans 243 residues: Transmembrane protein 174 (243 aa).

2 consecutive transmembrane segments (helical) span residues 40–60 (LLFS…MGWI) and 73–93 (LLGP…VCKF).

In terms of assembly, interacts with SLC34A1; regulates SLC34A1 internalization by PTH and FGF23. Predominantly expressed in kidney. Selectively localized in the apical membrane of renal proximal tubule epithelial cells.

The protein localises to the endoplasmic reticulum membrane. Its subcellular location is the apical cell membrane. In terms of biological role, regulator of plasma phosphate homeostasis. Decreases serum inorganic phosphate (Pi) uptake by regulating the sodium-phosphate cotransporter SLC34A1 trafficking by PTH and FGF23 in the kidney. This chain is Transmembrane protein 174 (TMEM174), found in Homo sapiens (Human).